Reading from the N-terminus, the 166-residue chain is PTS system glucose-specific EIIA component (166 aa).

The region spanning 34–138 (DPVFAQKMMG…SVISPIIITN (105 aa)) is the PTS EIIA type-1 domain. Residues His71 and His86 each coordinate Zn(2+). His86 serves as the catalytic Tele-phosphohistidine intermediate; for EIIA activity. A Phosphohistidine; by HPr modification is found at His86.

As to quaternary structure, heterodimer with glycerol kinase (glpk). It depends on Zn(2+) as a cofactor.

Its subcellular location is the cytoplasm. The phosphoenolpyruvate-dependent sugar phosphotransferase system (sugar PTS), a major carbohydrate active transport system, catalyzes the phosphorylation of incoming sugar substrates concomitantly with their translocation across the cell membrane. The enzyme II complex composed of PtsG and Crr is involved in glucose transport. The protein is PTS system glucose-specific EIIA component (crr) of Staphylococcus aureus (strain Mu50 / ATCC 700699).